Here is a 394-residue protein sequence, read N- to C-terminus: Elongation factor Tu 2 (394 aa).

The tr-type G domain maps to 10 to 204 (KPHVNVGTIG…ALDSYIPEPE (195 aa)). The interval 19–26 (GHVDHGKT) is G1. 19–26 (GHVDHGKT) lines the GTP pocket. Residue threonine 26 participates in Mg(2+) binding. The interval 60 to 64 (GITIS) is G2. Residues 81–84 (DCPG) form a G3 region. GTP-binding positions include 81-85 (DCPGH) and 136-139 (NKCD). The G4 stretch occupies residues 136–139 (NKCD). Positions 174-176 (SAL) are G5.

This sequence belongs to the TRAFAC class translation factor GTPase superfamily. Classic translation factor GTPase family. EF-Tu/EF-1A subfamily. Monomer.

It localises to the cytoplasm. It carries out the reaction GTP + H2O = GDP + phosphate + H(+). In terms of biological role, GTP hydrolase that promotes the GTP-dependent binding of aminoacyl-tRNA to the A-site of ribosomes during protein biosynthesis. The protein is Elongation factor Tu 2 of Pseudoalteromonas translucida (strain TAC 125).